The primary structure comprises 142 residues: Large ribosomal subunit protein uL11 (142 aa).

It belongs to the universal ribosomal protein uL11 family. As to quaternary structure, part of the ribosomal stalk of the 50S ribosomal subunit. Interacts with L10 and the large rRNA to form the base of the stalk. L10 forms an elongated spine to which L12 dimers bind in a sequential fashion forming a multimeric L10(L12)X complex. In terms of processing, one or more lysine residues are methylated.

Its function is as follows. Forms part of the ribosomal stalk which helps the ribosome interact with GTP-bound translation factors. This is Large ribosomal subunit protein uL11 from Buchnera aphidicola subsp. Schizaphis graminum (strain Sg).